A 31-amino-acid polypeptide reads, in one-letter code: Cytochrome b6-f complex subunit 6 (31 aa).

Residues 4–24 (ITSYFGFLLAALTITSVLFIG) traverse the membrane as a helical segment.

This sequence belongs to the PetL family. In terms of assembly, the 4 large subunits of the cytochrome b6-f complex are cytochrome b6, subunit IV (17 kDa polypeptide, PetD), cytochrome f and the Rieske protein, while the 4 small subunits are PetG, PetL, PetM and PetN. The complex functions as a dimer.

The protein resides in the plastid. It localises to the chloroplast thylakoid membrane. In terms of biological role, component of the cytochrome b6-f complex, which mediates electron transfer between photosystem II (PSII) and photosystem I (PSI), cyclic electron flow around PSI, and state transitions. PetL is important for photoautotrophic growth as well as for electron transfer efficiency and stability of the cytochrome b6-f complex. This chain is Cytochrome b6-f complex subunit 6, found in Arabidopsis thaliana (Mouse-ear cress).